The following is a 39-amino-acid chain: Phosphate starvation-inducible protein 1 (39 aa).

It is found in the cell outer membrane. This chain is Phosphate starvation-inducible protein 1, found in Pseudomonas fluorescens.